A 263-amino-acid chain; its full sequence is Protein maestro (263 aa).

The interval 1–21 (MDQTPRRMLGQPLSSPATQPK) is disordered. One copy of the HEAT repeat lies at 128-163 (SFFIDITLQTRTLLDDENDSLRYSAFVLFGQLADLA).

The protein resides in the nucleus. The protein localises to the nucleolus. The polypeptide is Protein maestro (MRO) (Bos taurus (Bovine)).